A 430-amino-acid chain; its full sequence is Dihydroorotase (430 aa).

Residues H57 and H59 each coordinate Zn(2+). Substrate-binding positions include 59–61 (HLR) and N91. D151, H178, and H231 together coordinate Zn(2+). N277 is a binding site for substrate. D304 lines the Zn(2+) pocket. D304 is an active-site residue. Substrate contacts are provided by residues H308 and 322–323 (PG).

Belongs to the metallo-dependent hydrolases superfamily. DHOase family. Class I DHOase subfamily. The cofactor is Zn(2+).

The enzyme catalyses (S)-dihydroorotate + H2O = N-carbamoyl-L-aspartate + H(+). The protein operates within pyrimidine metabolism; UMP biosynthesis via de novo pathway; (S)-dihydroorotate from bicarbonate: step 3/3. Catalyzes the reversible cyclization of carbamoyl aspartate to dihydroorotate. The sequence is that of Dihydroorotase from Mycobacterium leprae (strain TN).